Here is a 207-residue protein sequence, read N- to C-terminus: dTTP/UTP pyrophosphatase (207 aa).

Asp-87 serves as the catalytic Proton acceptor.

It belongs to the Maf family. YhdE subfamily. It depends on a divalent metal cation as a cofactor.

Its subcellular location is the cytoplasm. The enzyme catalyses dTTP + H2O = dTMP + diphosphate + H(+). It carries out the reaction UTP + H2O = UMP + diphosphate + H(+). Nucleoside triphosphate pyrophosphatase that hydrolyzes dTTP and UTP. May have a dual role in cell division arrest and in preventing the incorporation of modified nucleotides into cellular nucleic acids. The sequence is that of dTTP/UTP pyrophosphatase from Bordetella bronchiseptica (strain ATCC BAA-588 / NCTC 13252 / RB50) (Alcaligenes bronchisepticus).